A 209-amino-acid chain; its full sequence is Kynurenine formamidase (209 aa).

Tryptophan 20 serves as a coordination point for substrate. 3 residues coordinate Zn(2+): histidine 50, histidine 54, and aspartate 56. Histidine 60 serves as the catalytic Proton donor/acceptor. 2 residues coordinate Zn(2+): histidine 161 and glutamate 173.

It belongs to the Cyclase 1 superfamily. KynB family. As to quaternary structure, homodimer. Zn(2+) serves as cofactor.

The enzyme catalyses N-formyl-L-kynurenine + H2O = L-kynurenine + formate + H(+). Its pathway is amino-acid degradation; L-tryptophan degradation via kynurenine pathway; L-kynurenine from L-tryptophan: step 2/2. Its function is as follows. Catalyzes the hydrolysis of N-formyl-L-kynurenine to L-kynurenine, the second step in the kynurenine pathway of tryptophan degradation. In Bacillus cereus (strain ZK / E33L), this protein is Kynurenine formamidase.